A 164-amino-acid chain; its full sequence is 6,7-dimethyl-8-ribityllumazine synthase (164 aa).

Residues phenylalanine 24, 62 to 64 (SFE), and 86 to 88 (AVI) each bind 5-amino-6-(D-ribitylamino)uracil. Position 91 to 92 (91 to 92 (QT)) interacts with (2S)-2-hydroxy-3-oxobutyl phosphate. Histidine 94 serves as the catalytic Proton donor. A 5-amino-6-(D-ribitylamino)uracil-binding site is contributed by phenylalanine 119. Position 133 (arginine 133) interacts with (2S)-2-hydroxy-3-oxobutyl phosphate.

It belongs to the DMRL synthase family.

It catalyses the reaction (2S)-2-hydroxy-3-oxobutyl phosphate + 5-amino-6-(D-ribitylamino)uracil = 6,7-dimethyl-8-(1-D-ribityl)lumazine + phosphate + 2 H2O + H(+). The protein operates within cofactor biosynthesis; riboflavin biosynthesis; riboflavin from 2-hydroxy-3-oxobutyl phosphate and 5-amino-6-(D-ribitylamino)uracil: step 1/2. Functionally, catalyzes the formation of 6,7-dimethyl-8-ribityllumazine by condensation of 5-amino-6-(D-ribitylamino)uracil with 3,4-dihydroxy-2-butanone 4-phosphate. This is the penultimate step in the biosynthesis of riboflavin. This Synechocystis sp. (strain ATCC 27184 / PCC 6803 / Kazusa) protein is 6,7-dimethyl-8-ribityllumazine synthase.